Here is a 214-residue protein sequence, read N- to C-terminus: MSTKLQDHFDKITKILSGFGVEGCISYGEITFSIRDQRDIHLILKKLKKEYLFEQLTDVTAVDYLTYGQSDWQVGKVVSQTGFSRGRQQDFKTAAVDNRFEIIYQLLSMANNVRIRVKCKLKDAQIILVDSVSDLWSSANWAEREVYDMFGIYFNNHPDLRRVLTDYGFVGHPLRKDFPQTGYVEMRYDENLGRVVYEPVEIDDRVNTPRVIRN.

Belongs to the complex I 30 kDa subunit family. In terms of assembly, NDH-1 is composed of 14 different subunits. Subunits NuoB, C, D, E, F, and G constitute the peripheral sector of the complex.

The protein localises to the cell inner membrane. It catalyses the reaction a quinone + NADH + 5 H(+)(in) = a quinol + NAD(+) + 4 H(+)(out). NDH-1 shuttles electrons from NADH, via FMN and iron-sulfur (Fe-S) centers, to quinones in the respiratory chain. The immediate electron acceptor for the enzyme in this species is believed to be ubiquinone. Couples the redox reaction to proton translocation (for every two electrons transferred, four hydrogen ions are translocated across the cytoplasmic membrane), and thus conserves the redox energy in a proton gradient. The polypeptide is NADH-quinone oxidoreductase subunit C (Francisella tularensis subsp. novicida (strain U112)).